The sequence spans 164 residues: Protein SprT (164 aa).

The SprT-like domain occupies 13-156 (YQQAEAFFKR…LCKRCREILV (144 aa)). His-69 is a Zn(2+) binding site. Glu-70 is a catalytic residue. His-73 serves as a coordination point for Zn(2+).

Belongs to the SprT family. It depends on Zn(2+) as a cofactor.

The protein resides in the cytoplasm. The polypeptide is Protein SprT (Pseudomonas putida (strain ATCC 700007 / DSM 6899 / JCM 31910 / BCRC 17059 / LMG 24140 / F1)).